The sequence spans 360 residues: G-protein coupled receptor 15 (360 aa).

Over methionine 1–serine 33 the chain is Extracellular. Residues valine 34–leucine 54 traverse the membrane as a helical segment. The Cytoplasmic portion of the chain corresponds to methionine 55–aspartate 69. The chain crosses the membrane as a helical span at residues isoleucine 70 to valine 90. At aspartate 91 to serine 120 the chain is on the extracellular side. A helical membrane pass occupies residues valine 121 to serine 141. Residues arginine 142–cysteine 149 lie on the Cytoplasmic side of the membrane. Residues alanine 150–leucine 170 form a helical membrane-spanning segment. Residues serine 171–lysine 192 are Extracellular-facing. A helical transmembrane segment spans residues leucine 193–threonine 213. At cysteine 214–serine 239 the chain is on the cytoplasmic side. Residues isoleucine 240–phenylalanine 260 traverse the membrane as a helical segment. Over lysine 261–methionine 284 the chain is Extracellular. A helical transmembrane segment spans residues glutamate 285–phenylalanine 305. Residues aspartate 306–leucine 360 lie on the Cytoplasmic side of the membrane. Residue serine 359 is modified to Phosphoserine.

The protein belongs to the G-protein coupled receptor 1 family. Interacts with adapter YWHAE; this interaction promotes ER-to-Golgi transport of GPR15. Interacts with GNAI1; this interaction initiates the signaling pathway. Phosphorylation is necessary for YWHAE binding and efficient surface expression. Post-translationally, O-glycosylated. Sialylated O-glycans in the N-terminal tail inhibits binding of GPR15LG. In terms of processing, sulfation is required for efficient binding of GPR15LG. As to expression, highly expressed in lymphoid tissues, including macrophages and peripheral blood mononuclear cells.

The protein localises to the cell membrane. In terms of biological role, g protein-coupled receptor that plays an important role in immune homeostasis. Acts via its natural ligand GPR15LG, a chemokine-like polypeptide strongly expressed in gastrointestinal tissues. GPR15-GPR15LG signaling axis regulates intestinal homeostasis and inflammation through the migration of immune cells. Controls thereby the specific homing of T-cells, particularly FOXP3+ regulatory T-cells (Tregs), to the large intestine lamina propria. Also required for skin localization of thymus-derived dendritic epidermal T-cells. Plays an important role in mediating cytoprotective function as well as angiogenesis of thrombomodulin. Mechanistically, preferentially signals through the Gi/o pathway to inhibit adenylate cyclase activity and activate a phosphatidylinositol-calcium second messenger system that regulates the release of Ca(2+) ions from intracellular stores. (Microbial infection) Acts as an alternative coreceptor with CD4 for HIV-1 infection. This is G-protein coupled receptor 15 (GPR15) from Homo sapiens (Human).